The primary structure comprises 547 residues: Chaperonin GroEL 1 (547 aa).

ATP is bound by residues 30 to 33 (TLGP), K51, 87 to 91 (DGTTT), G415, and D496.

This sequence belongs to the chaperonin (HSP60) family. As to quaternary structure, forms a cylinder of 14 subunits composed of two heptameric rings stacked back-to-back. Interacts with the co-chaperonin GroES.

It localises to the cytoplasm. The enzyme catalyses ATP + H2O + a folded polypeptide = ADP + phosphate + an unfolded polypeptide.. In terms of biological role, together with its co-chaperonin GroES, plays an essential role in assisting protein folding. The GroEL-GroES system forms a nano-cage that allows encapsulation of the non-native substrate proteins and provides a physical environment optimized to promote and accelerate protein folding. The chain is Chaperonin GroEL 1 from Rhodopseudomonas palustris (strain ATCC BAA-98 / CGA009).